The following is a 218-amino-acid chain: uncharacterized protein (218 aa).

Over residues 184-202 (MDREEKRKEKEEKRKRELA) the composition is skewed to basic and acidic residues. The disordered stretch occupies residues 184–218 (MDREEKRKEKEEKRKRELAARQLKRQEKKKQKTSK). Over residues 205–218 (QLKRQEKKKQKTSK) the composition is skewed to basic residues.

This is an uncharacterized protein from Mycoplasma pneumoniae (strain ATCC 29342 / M129 / Subtype 1) (Mycoplasmoides pneumoniae).